The sequence spans 399 residues: MDEFDRDLDNELEFSHKSTKGVKVHRTFESMRLKPELLKGIYAYGFEAPSAIQSRAIMQIISGRDTIAQAQSGTGKTATFSIGMLEVLDSKSKECQALVLSPTRELATQIQNVIKHLGDYMNIQTYACIGGKNVGTDIKRLQQGQQIVSGTPGRVLDVIKRRNLSTRHIKMLILDEADELFTKGFKEQIYEIYKHLPPGVQVVVVSATLTHEVLEMTGKFTTDPVKILVKREEVSLSGIKQYYIQCEKEDWKFDTLCDLYDNLTITQAVIFCNTKIKVNWLTDQMRKQNFTVVAMHGDMKQEERDAIMNDFRSGNSRVLISTDVWARGIDVQQISLVINYDLPLDKENYIHRIGRSGRFGRKGTAINLLTKSDTIELKALEKYYSTKIKEMPSNVNDVM.

Residues 26 to 54 (RTFESMRLKPELLKGIYAYGFEAPSAIQS) carry the Q motif motif. The Helicase ATP-binding domain occupies 57 to 227 (IMQIISGRDT…GKFTTDPVKI (171 aa)). Residue 70–77 (AQSGTGKT) participates in ATP binding. A DEAD box motif is present at residues 175–178 (DEAD). One can recognise a Helicase C-terminal domain in the interval 238-399 (GIKQYYIQCE…EMPSNVNDVM (162 aa)).

This sequence belongs to the DEAD box helicase family. DDX48/FAL1 subfamily.

The protein localises to the nucleus. It localises to the nucleolus. The enzyme catalyses ATP + H2O = ADP + phosphate + H(+). In terms of biological role, ATP-dependent RNA helicase involved in 40S ribosomal subunit biogenesis. Required for the processing and cleavage of 35S pre-rRNA at sites A0, A1, and A2, leading to mature 18S rRNA. The chain is ATP-dependent RNA helicase FAL1 (FAL1) from Lodderomyces elongisporus (strain ATCC 11503 / CBS 2605 / JCM 1781 / NBRC 1676 / NRRL YB-4239) (Yeast).